We begin with the raw amino-acid sequence, 151 residues long: Arginine regulator (151 aa).

This sequence belongs to the ArgR family.

It localises to the cytoplasm. Its pathway is amino-acid degradation; L-arginine degradation via ADI pathway. Regulates the transcription of the arc operon, involved in arginine catabolism. The protein is Arginine regulator (argR1) of Clostridium perfringens (strain 13 / Type A).